The chain runs to 813 residues: Leucine--tRNA ligase (813 aa).

The short motif at 42-52 (PYTSGNLHIGH) is the 'HIGH' region element. The short motif at 580–584 (KMSKS) is the 'KMSKS' region element. Lys-583 is an ATP binding site.

This sequence belongs to the class-I aminoacyl-tRNA synthetase family.

It localises to the cytoplasm. It catalyses the reaction tRNA(Leu) + L-leucine + ATP = L-leucyl-tRNA(Leu) + AMP + diphosphate. The polypeptide is Leucine--tRNA ligase (Dehalococcoides mccartyi (strain ATCC BAA-2266 / KCTC 15142 / 195) (Dehalococcoides ethenogenes (strain 195))).